The primary structure comprises 1022 residues: Polyamine-modulated factor 1-binding protein 1 (1022 aa).

5 coiled-coil regions span residues 89–121 (NKQY…LQAS), 169–281 (EKLH…ACSN), 312–377 (SEDC…LREE), 411–732 (LKKD…SAIQ), and 758–968 (QDDL…KAGN). Composition is skewed to basic and acidic residues over residues 545–556 (QKESSKIEEERK) and 571–582 (EGQRRLSNAEKE). The interval 545–582 (QKESSKIEEERKHNRQRLQELSSELSEGQRRLSNAEKE) is disordered.

As to expression, expressed in the testis.

The protein resides in the cell projection. Its subcellular location is the cilium. It is found in the flagellum. Functionally, required for normal spermatogenesis. It functions as a scaffold protein that attaches the sperm head-tail connecting piece to the nuclear envelope, thus maintaining sperm head and tail integrity. May also be involved in the general organization of cellular cytoskeleton. The sequence is that of Polyamine-modulated factor 1-binding protein 1 (Pmfbp1) from Mus musculus (Mouse).